Here is a 140-residue protein sequence, read N- to C-terminus: ATP synthase epsilon chain (140 aa).

This sequence belongs to the ATPase epsilon chain family. As to quaternary structure, F-type ATPases have 2 components, CF(1) - the catalytic core - and CF(0) - the membrane proton channel. CF(1) has five subunits: alpha(3), beta(3), gamma(1), delta(1), epsilon(1). CF(0) has three main subunits: a, b and c.

The protein resides in the cell inner membrane. Produces ATP from ADP in the presence of a proton gradient across the membrane. The chain is ATP synthase epsilon chain from Nitrosomonas eutropha (strain DSM 101675 / C91 / Nm57).